An 869-amino-acid polypeptide reads, in one-letter code: Valine--tRNA ligase (869 aa).

The 'HIGH' region motif lies at 47 to 57; sequence PYPTGNFHIGN. The 'KMSKS' region motif lies at 521-525; it reads KMSKS. Lys-524 provides a ligand contact to ATP.

This sequence belongs to the class-I aminoacyl-tRNA synthetase family. ValS type 2 subfamily.

It localises to the cytoplasm. It carries out the reaction tRNA(Val) + L-valine + ATP = L-valyl-tRNA(Val) + AMP + diphosphate. Its function is as follows. Catalyzes the attachment of valine to tRNA(Val). As ValRS can inadvertently accommodate and process structurally similar amino acids such as threonine, to avoid such errors, it has a 'posttransfer' editing activity that hydrolyzes mischarged Thr-tRNA(Val) in a tRNA-dependent manner. The polypeptide is Valine--tRNA ligase (Methanosarcina mazei (strain ATCC BAA-159 / DSM 3647 / Goe1 / Go1 / JCM 11833 / OCM 88) (Methanosarcina frisia)).